Consider the following 319-residue polypeptide: Acetyl-coenzyme A carboxylase carboxyl transferase subunit alpha (319 aa).

In terms of domain architecture, CoA carboxyltransferase C-terminal spans 35–296 (DLDKEIEQLE…KANLLRQLED (262 aa)).

It belongs to the AccA family. In terms of assembly, acetyl-CoA carboxylase is a heterohexamer composed of biotin carboxyl carrier protein (AccB), biotin carboxylase (AccC) and two subunits each of ACCase subunit alpha (AccA) and ACCase subunit beta (AccD).

The protein resides in the cytoplasm. It catalyses the reaction N(6)-carboxybiotinyl-L-lysyl-[protein] + acetyl-CoA = N(6)-biotinyl-L-lysyl-[protein] + malonyl-CoA. It functions in the pathway lipid metabolism; malonyl-CoA biosynthesis; malonyl-CoA from acetyl-CoA: step 1/1. In terms of biological role, component of the acetyl coenzyme A carboxylase (ACC) complex. First, biotin carboxylase catalyzes the carboxylation of biotin on its carrier protein (BCCP) and then the CO(2) group is transferred by the carboxyltransferase to acetyl-CoA to form malonyl-CoA. The sequence is that of Acetyl-coenzyme A carboxylase carboxyl transferase subunit alpha from Vibrio campbellii (strain ATCC BAA-1116).